The sequence spans 190 residues: Orotate phosphoribosyltransferase (190 aa).

Glu-114–Ser-122 contributes to the 5-phospho-alpha-D-ribose 1-diphosphate binding site. Positions 118 and 146 each coordinate orotate.

It belongs to the purine/pyrimidine phosphoribosyltransferase family. PyrE subfamily. As to quaternary structure, homodimer. It depends on Mg(2+) as a cofactor.

It catalyses the reaction orotidine 5'-phosphate + diphosphate = orotate + 5-phospho-alpha-D-ribose 1-diphosphate. It functions in the pathway pyrimidine metabolism; UMP biosynthesis via de novo pathway; UMP from orotate: step 1/2. In terms of biological role, catalyzes the transfer of a ribosyl phosphate group from 5-phosphoribose 1-diphosphate to orotate, leading to the formation of orotidine monophosphate (OMP). The polypeptide is Orotate phosphoribosyltransferase (Thermoanaerobacter sp. (strain X514)).